A 134-amino-acid chain; its full sequence is Large ribosomal subunit protein uL18 (134 aa).

A disordered region spans residues 1-25; it reads MSNTAQNEKRLPVGKDISTRRRTAR. Basic and acidic residues predominate over residues 7-19; the sequence is NEKRLPVGKDIST.

The protein belongs to the universal ribosomal protein uL18 family. As to quaternary structure, part of the 50S ribosomal subunit; part of the 5S rRNA/L5/L18/L25 subcomplex. Contacts the 5S and 23S rRNAs.

This is one of the proteins that bind and probably mediate the attachment of the 5S RNA into the large ribosomal subunit, where it forms part of the central protuberance. The sequence is that of Large ribosomal subunit protein uL18 from Corynebacterium jeikeium (strain K411).